Consider the following 399-residue polypeptide: Tryptophan synthase beta chain (399 aa).

Lys92 is subject to N6-(pyridoxal phosphate)lysine.

This sequence belongs to the TrpB family. In terms of assembly, tetramer of two alpha and two beta chains. Pyridoxal 5'-phosphate serves as cofactor.

The enzyme catalyses (1S,2R)-1-C-(indol-3-yl)glycerol 3-phosphate + L-serine = D-glyceraldehyde 3-phosphate + L-tryptophan + H2O. The protein operates within amino-acid biosynthesis; L-tryptophan biosynthesis; L-tryptophan from chorismate: step 5/5. The beta subunit is responsible for the synthesis of L-tryptophan from indole and L-serine. This chain is Tryptophan synthase beta chain, found in Exiguobacterium sibiricum (strain DSM 17290 / CCUG 55495 / CIP 109462 / JCM 13490 / 255-15).